We begin with the raw amino-acid sequence, 657 residues long: Glycogen debranching enzyme (657 aa).

The active-site Nucleophile is Asp-336. The active-site Proton donor is the Glu-371. Residues 460–479 (ANGEENRDGTNNNYSNNHGK) form a disordered region.

This sequence belongs to the glycosyl hydrolase 13 family.

It catalyses the reaction Hydrolysis of (1-&gt;6)-alpha-D-glucosidic linkages to branches with degrees of polymerization of three or four glucose residues in limit dextrin.. It participates in glycan degradation; glycogen degradation. In terms of biological role, removes maltotriose and maltotetraose chains that are attached by 1,6-alpha-linkage to the limit dextrin main chain, generating a debranched limit dextrin. This Escherichia coli O9:H4 (strain HS) protein is Glycogen debranching enzyme.